A 148-amino-acid polypeptide reads, in one-letter code: NADPH-dependent 7-cyano-7-deazaguanine reductase (148 aa).

The active-site Thioimide intermediate is the cysteine 50. Aspartate 57 (proton donor) is an active-site residue. Residues 72–74 (VES) and 91–92 (HE) each bind substrate.

This sequence belongs to the GTP cyclohydrolase I family. QueF type 1 subfamily.

Its subcellular location is the cytoplasm. It carries out the reaction 7-aminomethyl-7-carbaguanine + 2 NADP(+) = 7-cyano-7-deazaguanine + 2 NADPH + 3 H(+). The protein operates within tRNA modification; tRNA-queuosine biosynthesis. Functionally, catalyzes the NADPH-dependent reduction of 7-cyano-7-deazaguanine (preQ0) to 7-aminomethyl-7-deazaguanine (preQ1). The chain is NADPH-dependent 7-cyano-7-deazaguanine reductase from Helicobacter pylori (strain G27).